A 180-amino-acid polypeptide reads, in one-letter code: Ribulose bisphosphate carboxylase small subunit, chloroplastic 3 (180 aa).

The N-terminal 56 residues, 1–56 (MASSVMSSAAVATRGNGAQASMVAPFTGLKSTASFPVSRKQNLDITSIASNGGRVS), are a transit peptide targeting the chloroplast.

This sequence belongs to the RuBisCO small chain family. In terms of assembly, heterohexadecamer of 8 large and 8 small subunits. (Microbial infection) Binds to tobamovirus movement protein; this interaction seems required for viral systemic movement.

The protein localises to the plastid. The protein resides in the chloroplast. It is found in the cell junction. Its subcellular location is the plasmodesma. In terms of biological role, ruBisCO catalyzes two reactions: the carboxylation of D-ribulose 1,5-bisphosphate, the primary event in carbon dioxide fixation, as well as the oxidative fragmentation of the pentose substrate. Both reactions occur simultaneously and in competition at the same active site. Although the small subunit is not catalytic it is essential for maximal activity. Involved in antiviral defenses. The sequence is that of Ribulose bisphosphate carboxylase small subunit, chloroplastic 3 from Solanum lycopersicum (Tomato).